Consider the following 290-residue polypeptide: Arylamine N-acetyltransferase 1 (290 aa).

An N-acetylmethionine modification is found at Met-1. Cys-68 functions as the Acyl-thioester intermediate in the catalytic mechanism. Ser-103 serves as a coordination point for CoA. 106 to 107 (IH) lines the substrate pocket. Residues His-107 and Asp-122 contribute to the active site. Positions 208 and 287 each coordinate CoA.

This sequence belongs to the arylamine N-acetyltransferase family.

It is found in the cytoplasm. It carries out the reaction an arylamine + acetyl-CoA = an N-acetylarylamine + CoA. Functionally, participates in the detoxification of a plethora of hydrazine and arylamine drugs. The protein is Arylamine N-acetyltransferase 1 (NAT1) of Mesocricetus auratus (Golden hamster).